We begin with the raw amino-acid sequence, 55 residues long: UPF0434 protein Erum1340/ERWE_CDS_01300 (55 aa).

Belongs to the UPF0434 family.

This chain is UPF0434 protein Erum1340/ERWE_CDS_01300, found in Ehrlichia ruminantium (strain Welgevonden).